A 734-amino-acid polypeptide reads, in one-letter code: Oligopeptide transporter 2 (734 aa).

The next 14 membrane-spanning stretches (helical) occupy residues 44-64 (MWFL…FFGY), 68-88 (PLMI…KLMA), 125-145 (GAGF…IMAF), 152-172 (FLAS…WAGI), 211-231 (FFVI…YLFL), 252-272 (LGSG…SVIA), 283-303 (FFAI…VIPI), 359-379 (FFAI…THVA), 414-434 (WWFY…CIFM), 442-462 (WWGL…VSII), 525-545 (MFLV…SVAW), 596-616 (YPAL…VWLL), 644-664 (ATSV…YFVF), and 677-697 (VLSA…YFSL).

It belongs to the oligopeptide OPT transporter (TC 2.A.67.1) family. In terms of tissue distribution, expressed in flowers, leaves, roots, and stems.

It localises to the membrane. Involved in the translocation of tetra- and pentapeptides across the cellular membrane in an energy-dependent manner. The protein is Oligopeptide transporter 2 (OPT2) of Arabidopsis thaliana (Mouse-ear cress).